The chain runs to 276 residues: Large ribosomal subunit protein uL2 (276 aa).

The interval 219 to 276 (TVRGSVMNPNDHPHGGGEGKQPIGRKQQMTPWGKKARGIKTRDKKKASTSMIVRRRNG) is disordered. A compositionally biased stretch (basic residues) spans 252 to 276 (KKARGIKTRDKKKASTSMIVRRRNG).

Belongs to the universal ribosomal protein uL2 family. In terms of assembly, part of the 50S ribosomal subunit. Forms a bridge to the 30S subunit in the 70S ribosome.

In terms of biological role, one of the primary rRNA binding proteins. Required for association of the 30S and 50S subunits to form the 70S ribosome, for tRNA binding and peptide bond formation. It has been suggested to have peptidyltransferase activity; this is somewhat controversial. Makes several contacts with the 16S rRNA in the 70S ribosome. The polypeptide is Large ribosomal subunit protein uL2 (Acholeplasma laidlawii (strain PG-8A)).